The sequence spans 313 residues: MMENYKHTTVLLDEAVNGLNIRPDGIYIDGTFGRGGHSRLILSQLGEEGRLLAIDRDPQAIAVAKTIDDPRFSIIHGPFSALGEYVAERDLIGKIDGILLDLGVSSPQLDDAERGFSFMRDGPLDMRMDPTCGQSAAEWLQTAEEADIAWVLKTYGEERFAKRIARAIVERNREQPMTRTKELAEVVAAATPVKDKFKHPATRTFQAVRIWVNSELEEIEQALKSSLNVLAPGGRLSIISFHSLEDRIVKRFMRENSRGPQVPAGLPMTEEQLKKLGGRQLRALGKLMPGEEEVAENPRARSSVLRIAERTNV.

S-adenosyl-L-methionine is bound by residues 35–37 (GGH), Asp55, Phe79, Asp101, and Gln108.

Belongs to the methyltransferase superfamily. RsmH family.

The protein localises to the cytoplasm. The catalysed reaction is cytidine(1402) in 16S rRNA + S-adenosyl-L-methionine = N(4)-methylcytidine(1402) in 16S rRNA + S-adenosyl-L-homocysteine + H(+). Its function is as follows. Specifically methylates the N4 position of cytidine in position 1402 (C1402) of 16S rRNA. The polypeptide is Ribosomal RNA small subunit methyltransferase H (Shigella dysenteriae serotype 1 (strain Sd197)).